The chain runs to 362 residues: Peptide chain release factor 1 (362 aa).

Residue Gln-237 is modified to N5-methylglutamine.

It belongs to the prokaryotic/mitochondrial release factor family. Post-translationally, methylated by PrmC. Methylation increases the termination efficiency of RF1.

The protein resides in the cytoplasm. Peptide chain release factor 1 directs the termination of translation in response to the peptide chain termination codons UAG and UAA. The protein is Peptide chain release factor 1 of Vibrio campbellii (strain ATCC BAA-1116).